The chain runs to 383 residues: Agmatine deiminase (383 aa).

Residues aspartate 220 and aspartate 226 each contribute to the agmatine site. The Amidino-cysteine intermediate role is filled by cysteine 366.

The protein belongs to the agmatine deiminase family. In terms of assembly, forms homodimers.

It carries out the reaction agmatine + H2O = N-carbamoylputrescine + NH4(+). It participates in amine and polyamine biosynthesis; putrescine biosynthesis via agmatine pathway; N-carbamoylputrescine from agmatine: step 1/1. Inhibited by N-ethylmaleimide and iodoacetamide. Its function is as follows. Mediates the hydrolysis of agmatine into N-carbamoylputrescine in the arginine decarboxylase (ADC) pathway of putrescine biosynthesis, a basic polyamine. This is Agmatine deiminase (AIH) from Arabidopsis thaliana (Mouse-ear cress).